Reading from the N-terminus, the 86-residue chain is Small ribosomal subunit protein bS16 (86 aa).

Belongs to the bacterial ribosomal protein bS16 family.

The chain is Small ribosomal subunit protein bS16 from Acidithiobacillus ferrooxidans (strain ATCC 23270 / DSM 14882 / CIP 104768 / NCIMB 8455) (Ferrobacillus ferrooxidans (strain ATCC 23270)).